The primary structure comprises 339 residues: Dual specificity protein phosphatase 12 (339 aa).

Residue M1 is modified to N-acetylmethionine. Over residues 1–22 (MLEVQSSNHGCERQAPTTSPAS) the composition is skewed to polar residues. The interval 1 to 25 (MLEVQSSNHGCERQAPTTSPASSAG) is disordered. One can recognise a Tyrosine-protein phosphatase domain in the interval 26–170 (HAVEVRPGLY…LKLYEAMGHE (145 aa)). Residue C114 is the Phosphocysteine intermediate of the active site. Residue 115–120 (HAGVSR) participates in substrate binding. At S334 the chain carries Phosphoserine.

This sequence belongs to the protein-tyrosine phosphatase family. Non-receptor class dual specificity subfamily. Monomer. Zn(2+) is required as a cofactor.

The protein resides in the nucleus. The protein localises to the cytoplasm. It is found in the cytosol. The enzyme catalyses O-phospho-L-tyrosyl-[protein] + H2O = L-tyrosyl-[protein] + phosphate. It carries out the reaction O-phospho-L-seryl-[protein] + H2O = L-seryl-[protein] + phosphate. The catalysed reaction is O-phospho-L-threonyl-[protein] + H2O = L-threonyl-[protein] + phosphate. In terms of biological role, dual specificity phosphatase; can dephosphorylate both phosphotyrosine and phosphoserine or phosphothreonine residues. Can dephosphorylate glucokinase (in vitro). Has phosphatase activity with the synthetic substrate 6,8-difluoro-4-methylumbelliferyl phosphate and other in vitro substrates. This chain is Dual specificity protein phosphatase 12 (Dusp12), found in Rattus norvegicus (Rat).